Reading from the N-terminus, the 329-residue chain is D-alanine--D-alanine ligase (329 aa).

The 207-residue stretch at 120 to 326 folds into the ATP-grasp domain; the sequence is KLWLSAIGIP…FADYLEQILR (207 aa). 150-205 lines the ATP pocket; sequence ALAKWGKVFIKAASQGSSVGCYSASNEADLVKGIADAFGYSEQVLIEKAVKPRELE. Mg(2+)-binding residues include Asp-280, Glu-293, and Asn-295.

This sequence belongs to the D-alanine--D-alanine ligase family. Mg(2+) serves as cofactor. Mn(2+) is required as a cofactor.

The protein localises to the cytoplasm. It catalyses the reaction 2 D-alanine + ATP = D-alanyl-D-alanine + ADP + phosphate + H(+). Its pathway is cell wall biogenesis; peptidoglycan biosynthesis. Its function is as follows. Cell wall formation. This is D-alanine--D-alanine ligase from Aeromonas hydrophila subsp. hydrophila (strain ATCC 7966 / DSM 30187 / BCRC 13018 / CCUG 14551 / JCM 1027 / KCTC 2358 / NCIMB 9240 / NCTC 8049).